The primary structure comprises 186 residues: Elongation factor P (186 aa).

Belongs to the elongation factor P family.

Its subcellular location is the cytoplasm. The protein operates within protein biosynthesis; polypeptide chain elongation. Involved in peptide bond synthesis. Stimulates efficient translation and peptide-bond synthesis on native or reconstituted 70S ribosomes in vitro. Probably functions indirectly by altering the affinity of the ribosome for aminoacyl-tRNA, thus increasing their reactivity as acceptors for peptidyl transferase. The polypeptide is Elongation factor P (Prochlorococcus marinus (strain MIT 9303)).